We begin with the raw amino-acid sequence, 240 residues long: Probable transcriptional regulatory protein HPAG1_0159 (240 aa).

The protein belongs to the TACO1 family.

The protein localises to the cytoplasm. This Helicobacter pylori (strain HPAG1) protein is Probable transcriptional regulatory protein HPAG1_0159.